The primary structure comprises 85 residues: UPF0297 protein LGAS_0422 (85 aa).

This sequence belongs to the UPF0297 family.

This Lactobacillus gasseri (strain ATCC 33323 / DSM 20243 / BCRC 14619 / CIP 102991 / JCM 1131 / KCTC 3163 / NCIMB 11718 / NCTC 13722 / AM63) protein is UPF0297 protein LGAS_0422.